We begin with the raw amino-acid sequence, 290 residues long: Pantothenate synthetase (290 aa).

An ATP-binding site is contributed by Met-34 to His-41. Catalysis depends on His-41, which acts as the Proton donor. Position 65 (Gln-65) interacts with (R)-pantoate. Gln-65 contributes to the beta-alanine binding site. Gly-156–Asp-159 contacts ATP. Gln-162 is a (R)-pantoate binding site. ATP is bound by residues Ala-185 and Leu-193–Arg-196.

Belongs to the pantothenate synthetase family. Homodimer.

It is found in the cytoplasm. The enzyme catalyses (R)-pantoate + beta-alanine + ATP = (R)-pantothenate + AMP + diphosphate + H(+). The protein operates within cofactor biosynthesis; (R)-pantothenate biosynthesis; (R)-pantothenate from (R)-pantoate and beta-alanine: step 1/1. Functionally, catalyzes the condensation of pantoate with beta-alanine in an ATP-dependent reaction via a pantoyl-adenylate intermediate. The protein is Pantothenate synthetase of Acidovorax ebreus (strain TPSY) (Diaphorobacter sp. (strain TPSY)).